The primary structure comprises 152 residues: MTNQSYYETMYILRPDIAEDEVTNHIDKYNKLLEEFGGTILDSQMRGKRRLAYQIAKHREGIYVQLSHQGDGQHIFKIEKAMRISEDVIRYMTVKQEGPLPTPKPSNKSSTQSENKDNPETKVESKEEQSVTNSDTSTTKKDDNEIKENTES.

The tract at residues 94–152 (VKQEGPLPTPKPSNKSSTQSENKDNPETKVESKEEQSVTNSDTSTTKKDDNEIKENTES) is disordered. 2 stretches are compositionally biased toward basic and acidic residues: residues 114-129 (ENKD…KEEQ) and 138-152 (TTKK…NTES).

This sequence belongs to the bacterial ribosomal protein bS6 family.

Functionally, binds together with bS18 to 16S ribosomal RNA. The sequence is that of Small ribosomal subunit protein bS6 from Prochlorococcus marinus (strain MIT 9312).